The chain runs to 183 residues: Cell division protein ZapC (183 aa).

It belongs to the ZapC family. Interacts directly with FtsZ.

The protein resides in the cytoplasm. Its function is as follows. Contributes to the efficiency of the cell division process by stabilizing the polymeric form of the cell division protein FtsZ. Acts by promoting interactions between FtsZ protofilaments and suppressing the GTPase activity of FtsZ. The polypeptide is Cell division protein ZapC (Proteus mirabilis (strain HI4320)).